Reading from the N-terminus, the 249-residue chain is Homeobox protein TGIF2LX (249 aa).

2 disordered regions span residues 1-65 (MEAA…GYSP) and 126-199 (DPIV…PKKK). Residues 9–27 (AETRSRVEKDSRRAIKDSP) are compositionally biased toward basic and acidic residues. Residues 28–46 (AKTQSPAQDTSIMLRNNAD) show a composition bias toward polar residues. The segment at residues 55–118 (EHKKKRKGYS…INARRRILPD (64 aa)) is a DNA-binding region (homeobox; TALE-type). Residues 159 to 172 (DNVQSLPLRSSPKG) are compositionally biased toward polar residues.

Belongs to the TALE/TGIF homeobox family.

It localises to the nucleus. In terms of biological role, may have a transcription role in testis. The chain is Homeobox protein TGIF2LX (TGIF2LX) from Macaca mulatta (Rhesus macaque).